The sequence spans 594 residues: UvrABC system protein C (594 aa).

The GIY-YIG domain maps to 14-91; it reads DQPGCYLMKD…IKKYDPKYNI (78 aa). Residues 196–231 enclose the UVR domain; that stretch reads KEIRSELETKMYEASEKLEFERAKELRDQIAHIDAI.

Belongs to the UvrC family. As to quaternary structure, interacts with UvrB in an incision complex.

It localises to the cytoplasm. In terms of biological role, the UvrABC repair system catalyzes the recognition and processing of DNA lesions. UvrC both incises the 5' and 3' sides of the lesion. The N-terminal half is responsible for the 3' incision and the C-terminal half is responsible for the 5' incision. This is UvrABC system protein C from Bacillus mycoides (strain KBAB4) (Bacillus weihenstephanensis).